Reading from the N-terminus, the 272-residue chain is Undecaprenyl-diphosphatase (272 aa).

8 consecutive transmembrane segments (helical) span residues 1–21 (MSYL…FLPI), 38–58 (PGAT…VVFF), 84–104 (VRMG…GYLF), 112–132 (FRSL…LGLA), 145–165 (MTYG…VPGV), 183–203 (PVAA…SGLY), 219–239 (QTAV…AGLM), and 250–270 (FVVY…TGAI).

It belongs to the UppP family.

The protein resides in the cell membrane. The enzyme catalyses di-trans,octa-cis-undecaprenyl diphosphate + H2O = di-trans,octa-cis-undecaprenyl phosphate + phosphate + H(+). Functionally, catalyzes the dephosphorylation of undecaprenyl diphosphate (UPP). Confers resistance to bacitracin. The chain is Undecaprenyl-diphosphatase from Clavibacter michiganensis subsp. michiganensis (strain NCPPB 382).